Consider the following 514-residue polypeptide: Cytochrome P450 monooxygenase ptmQ (514 aa).

Residues 3–23 traverse the membrane as a helical segment; it reads YVAQSPWIATLIVTATTYCTL. N-linked (GlcNAc...) asparagine glycosylation occurs at asparagine 148. Cysteine 452 serves as a coordination point for heme. A glycan (N-linked (GlcNAc...) asparagine) is linked at asparagine 486.

It belongs to the cytochrome P450 family. Requires heme as cofactor.

It localises to the membrane. It functions in the pathway secondary metabolite biosynthesis. Its function is as follows. Cytochrome P450 monooxygenase; part of the gene cluster that mediates the biosynthesis of the indole diterpenes penitrems. The geranylgeranyl diphosphate (GGPP) synthase ptmG catalyzes the first step in penitrem biosynthesis via conversion of farnesyl pyrophosphate and isopentyl pyrophosphate into geranylgeranyl pyrophosphate (GGPP). Condensation of indole-3-glycerol phosphate with GGPP by the prenyl transferase ptmC then forms 3-geranylgeranylindole (3-GGI). Epoxidation by the FAD-dependent monooxygenase ptmM leads to a epoxidized-GGI that is substrate of the terpene cyclase ptmB for cyclization to yield paspaline. Paspaline is subsequently converted to 13-desoxypaxilline by the cytochrome P450 monooxygenase ptmP, the latter being then converted to paxilline by the cytochrome P450 monooxygenase ptmQ. Paxilline is converted to beta-paxitriol via C-10 ketoreduction by the short-chain dehydrogenase ptmH which can be monoprenylated at the C-20 by the indole diterpene prenyltransferase ptmD. A two-step elimination (acetylation and elimination) process performed by the O-acetyltransferase ptmV and ptmI leads to the production of the prenylated form of penijanthine. The FAD-linked oxidoreductase ptmO then converts the prenylated form of penijanthine into PC-M5 which is in turn transformed into PC-M4 by the aromatic dimethylallyltransferase ptmE. Five sequential oxidative transformations performed by the cytochrome P450 monooxygenases ptmK, ptmU, ptmL, ptmN and ptmJ yield the various penitrem compounds. PtmK, ptmU and ptmM are involved in the formation of the key bicyclic ring of penitrem C via the formation of the intermediates secopenitrem D and penitrem D. PtmL catalyzes the epoxidation of penitrem D and C to yield penitrem B and F, respectively. PtmJ catalyzes the last benzylic hydroxylation to convert penitrem B to prenitrem E and penitrem F to penitrem A. The protein is Cytochrome P450 monooxygenase ptmQ of Penicillium ochrochloron.